We begin with the raw amino-acid sequence, 85 residues long: Depressant insect toxin BmK ITa1 (85 aa).

The signal sequence occupies residues Met1–Ala21. The region spanning Asp22 to Gly82 is the LCN-type CS-alpha/beta domain. 4 disulfide bridges follow: Cys31–Cys81, Cys35–Cys56, Cys42–Cys63, and Cys46–Cys65. Residue Gly82 is modified to Glycine amide.

It belongs to the long (4 C-C) scorpion toxin superfamily. Sodium channel inhibitor family. Beta subfamily. In terms of tissue distribution, expressed by the venom gland.

It is found in the secreted. Its function is as follows. Depressant insect toxins cause a transient contraction paralysis followed by a slow flaccid paralysis. They bind voltage-independently to sodium channels (Nav) and block action potentials, primarily by depolarizing the axonal membrane and suppressing the sodium current. The sequence is that of Depressant insect toxin BmK ITa1 from Olivierus martensii (Manchurian scorpion).